Reading from the N-terminus, the 206-residue chain is Ion-translocating oxidoreductase complex subunit G (206 aa).

The chain crosses the membrane as a helical span at residues 9-29 (GITLALFAAGSTGLTAAINQM). At Thr174 the chain carries FMN phosphoryl threonine.

The protein belongs to the RnfG family. In terms of assembly, the complex is composed of six subunits: RsxA, RsxB, RsxC, RsxD, RsxE and RsxG. The cofactor is FMN.

It is found in the cell inner membrane. Its function is as follows. Part of a membrane-bound complex that couples electron transfer with translocation of ions across the membrane. Required to maintain the reduced state of SoxR. Probably transfers electron from NAD(P)H to SoxR. The sequence is that of Ion-translocating oxidoreductase complex subunit G from Escherichia coli (strain K12).